We begin with the raw amino-acid sequence, 166 residues long: Regulatory protein RecX (166 aa).

Belongs to the RecX family.

The protein resides in the cytoplasm. Functionally, modulates RecA activity. This is Regulatory protein RecX from Escherichia coli (strain SMS-3-5 / SECEC).